The chain runs to 266 residues: Putative pyruvate, phosphate dikinase regulatory protein (266 aa).

G149 to T156 lines the ADP pocket.

Belongs to the pyruvate, phosphate/water dikinase regulatory protein family. PDRP subfamily.

It carries out the reaction N(tele)-phospho-L-histidyl/L-threonyl-[pyruvate, phosphate dikinase] + ADP = N(tele)-phospho-L-histidyl/O-phospho-L-threonyl-[pyruvate, phosphate dikinase] + AMP + H(+). The enzyme catalyses N(tele)-phospho-L-histidyl/O-phospho-L-threonyl-[pyruvate, phosphate dikinase] + phosphate + H(+) = N(tele)-phospho-L-histidyl/L-threonyl-[pyruvate, phosphate dikinase] + diphosphate. In terms of biological role, bifunctional serine/threonine kinase and phosphorylase involved in the regulation of the pyruvate, phosphate dikinase (PPDK) by catalyzing its phosphorylation/dephosphorylation. This chain is Putative pyruvate, phosphate dikinase regulatory protein, found in Geobacillus thermodenitrificans (strain NG80-2).